An 843-amino-acid polypeptide reads, in one-letter code: Protein P (843 aa).

The segment at 1-177 is terminal protein domain (TP); sequence MPLSYPHFRK…FCGSPYSWEQ (177 aa). The interval 178-346 is spacer; that stretch reads ELQHGSTSLN…YCLSHIINLL (169 aa). Residues 284 to 308 form a disordered region; it reads EANPSLSTSKRHTSTGNAVELNPVP. The interval 347-690 is polymerase/reverse transcriptase domain (RT); sequence EDWGPCYEHG…YMNLYPVARQ (344 aa). The 244-residue stretch at 357–600 folds into the Reverse transcriptase domain; the sequence is QHHIRTPRTP…YNLHFMGYVI (244 aa). Mg(2+) contacts are provided by Asp-429, Asp-551, and Asp-552.

It belongs to the hepadnaviridae P protein family.

The enzyme catalyses DNA(n) + a 2'-deoxyribonucleoside 5'-triphosphate = DNA(n+1) + diphosphate. The catalysed reaction is Endonucleolytic cleavage to 5'-phosphomonoester.. Its activity is regulated as follows. Activated by host HSP70 and HSP40 in vitro to be able to bind the epsilon loop of the pgRNA. Because deletion of the RNase H region renders the protein partly chaperone-independent, the chaperones may be needed indirectly to relieve occlusion of the RNA-binding site by this domain. Inhibited by several reverse-transcriptase inhibitors: Lamivudine, Adefovir and Entecavir. Multifunctional enzyme that converts the viral RNA genome into dsDNA in viral cytoplasmic capsids. This enzyme displays a DNA polymerase activity that can copy either DNA or RNA templates, and a ribonuclease H (RNase H) activity that cleaves the RNA strand of RNA-DNA heteroduplexes in a partially processive 3'- to 5'-endonucleasic mode. Neo-synthesized pregenomic RNA (pgRNA) are encapsidated together with the P protein, and reverse-transcribed inside the nucleocapsid. Initiation of reverse-transcription occurs first by binding the epsilon loop on the pgRNA genome, and is initiated by protein priming, thereby the 5'-end of (-)DNA is covalently linked to P protein. Partial (+)DNA is synthesized from the (-)DNA template and generates the relaxed circular DNA (RC-DNA) genome. After budding and infection, the RC-DNA migrates in the nucleus, and is converted into a plasmid-like covalently closed circular DNA (cccDNA). The activity of P protein does not seem to be necessary for cccDNA generation, and is presumably released from (+)DNA by host nuclear DNA repair machinery. This Homo sapiens (Human) protein is Protein P.